The following is a 102-amino-acid chain: Envelope protein US9 (102 aa).

Topologically, residues 1–75 (MAGQNTMEGE…KIYHRKKFCY (75 aa)) are intravirion. The Di-leucine internalization motif signature appears at 14-15 (LL). Residues 41–55 (EKCYYSDSENETADE) form an acidic region. Phosphoserine; by host CK2 is present on residues Ser-46 and Ser-48. Residues 76 to 96 (ITLIIVFVFAMTGAAFALGYI) traverse the membrane as a helical; Signal-anchor for type II membrane protein segment. The Virion surface portion of the chain corresponds to 97 to 102 (TSQFVG).

It belongs to the alphaherpesvirinae envelope protein US9 family. In terms of processing, phosphorylated on serines within the acidic cluster, possibly by host CK2. Phosphorylation determines whether endocytosed viral US9 traffics to the trans-Golgi network or recycles to the cell membrane.

The protein resides in the virion membrane. The protein localises to the host Golgi apparatus membrane. Its subcellular location is the host Golgi apparatus. It is found in the host trans-Golgi network. It localises to the host cell membrane. Functionally, essential for the anterograde spread of the infection throughout the host nervous system. Together with the gE/gI heterodimer, US9 is involved in the sorting and transport of viral structural components toward axon tips. The polypeptide is Envelope protein US9 (Varicella-zoster virus (strain Dumas) (HHV-3)).